A 451-amino-acid polypeptide reads, in one-letter code: Probable tyrosyl-DNA phosphodiesterase (451 aa).

The tract at residues 1-34 (MKRTIQETPGPSSTTVPPPKKLNSQRNGSNLEPG) is disordered. A compositionally biased stretch (polar residues) spans 22–32 (LNSQRNGSNLE). Catalysis depends on histidine 131, which acts as the Nucleophile. Lysine 133 provides a ligand contact to substrate. The interaction with DNA stretch occupies residues 266 to 269 (SIGS). Histidine 356 serves as the catalytic Proton donor/acceptor. Lysine 358 is a binding site for substrate.

Belongs to the tyrosyl-DNA phosphodiesterase family.

It localises to the nucleus. Its function is as follows. DNA repair enzyme that can remove a variety of covalent adducts from DNA through hydrolysis of a 3'-phosphodiester bond, giving rise to DNA with a free 3' phosphate. Catalyzes the hydrolysis of dead-end complexes between DNA and the topoisomerase I active site tyrosine residue. Hydrolyzes 3'-phosphoglycolates on protruding 3' ends on DNA double-strand breaks due to DNA damage by radiation and free radicals. Acts on blunt-ended double-strand DNA breaks and on single-stranded DNA. May have low 3'exonuclease activity and may be able to remove a single nucleoside from the 3'end of DNA and RNA molecules with 3'hydroxyl groups. Has no exonuclease activity towards DNA or RNA with a 3'phosphate. This Caenorhabditis elegans protein is Probable tyrosyl-DNA phosphodiesterase.